The primary structure comprises 430 residues: Enolase (430 aa).

(2R)-2-phosphoglycerate is bound at residue Gln-167. Residue Glu-209 is the Proton donor of the active site. 3 residues coordinate Mg(2+): Asp-246, Glu-289, and Asp-316. (2R)-2-phosphoglycerate contacts are provided by Lys-341, Arg-370, Ser-371, and Lys-392. Catalysis depends on Lys-341, which acts as the Proton acceptor.

The protein belongs to the enolase family. As to quaternary structure, component of the RNA degradosome, a multiprotein complex involved in RNA processing and mRNA degradation. It depends on Mg(2+) as a cofactor.

The protein resides in the cytoplasm. The protein localises to the secreted. It localises to the cell surface. It carries out the reaction (2R)-2-phosphoglycerate = phosphoenolpyruvate + H2O. The protein operates within carbohydrate degradation; glycolysis; pyruvate from D-glyceraldehyde 3-phosphate: step 4/5. Its function is as follows. Catalyzes the reversible conversion of 2-phosphoglycerate (2-PG) into phosphoenolpyruvate (PEP). It is essential for the degradation of carbohydrates via glycolysis. The chain is Enolase from Alcanivorax borkumensis (strain ATCC 700651 / DSM 11573 / NCIMB 13689 / SK2).